The sequence spans 349 residues: AdoMet-dependent heme synthase (349 aa).

The 210-residue stretch at 5 to 214 folds into the Radical SAM core domain; it reads TNAPRLIAWE…LHWFYEMQKE (210 aa). [4Fe-4S] cluster-binding residues include cysteine 19, cysteine 23, and cysteine 26.

Belongs to the radical SAM superfamily. [4Fe-4S] cluster is required as a cofactor.

The enzyme catalyses Fe-coproporphyrin III + 2 S-adenosyl-L-methionine = heme b + 2 5'-deoxyadenosine + 2 L-methionine + 2 CO2. It functions in the pathway porphyrin-containing compound metabolism; protoheme biosynthesis. Its function is as follows. Involved in siroheme-dependent heme b biosynthesis. Catalyzes the conversion of Fe-coproporphyrin III into heme by the oxidative decarboxylation of two propionate side chains. This Methanosarcina barkeri (strain Fusaro / DSM 804) protein is AdoMet-dependent heme synthase.